The sequence spans 98 residues: Endoribonuclease antitoxin GhoS (98 aa).

As to quaternary structure, monomer. Unlike other TA antitoxins, this protein is stable.

Its function is as follows. Antitoxin component of a type V toxin-antitoxin (TA) system. Neutralizes the toxic effects of toxin GhoT by digesting ghoT transcripts in a sequence-specific manner. In concert with GhoT is involved in reducing cell growth during antibacterial stress. The protein is Endoribonuclease antitoxin GhoS of Escherichia coli O157:H7.